The primary structure comprises 289 residues: Pyridoxal kinase PdxY (289 aa).

Substrate-binding positions include Ser-9 and 44–45; that span reads TQ. Residues Asp-112, Ala-144, Glu-149, Lys-183, and 210 to 213 contribute to the ATP site; that span reads RPLV. Asp-225 lines the substrate pocket.

It belongs to the pyridoxine kinase family. PdxY subfamily. Homodimer. Mg(2+) is required as a cofactor.

It carries out the reaction pyridoxal + ATP = pyridoxal 5'-phosphate + ADP + H(+). It functions in the pathway cofactor metabolism; pyridoxal 5'-phosphate salvage; pyridoxal 5'-phosphate from pyridoxal: step 1/1. Functionally, pyridoxal kinase involved in the salvage pathway of pyridoxal 5'-phosphate (PLP). Catalyzes the phosphorylation of pyridoxal to PLP. The polypeptide is Pyridoxal kinase PdxY (Proteus mirabilis).